Here is a 91-residue protein sequence, read N- to C-terminus: Probable Fe(2+)-trafficking protein (91 aa).

The protein belongs to the Fe(2+)-trafficking protein family. In terms of assembly, monomer.

Could be a mediator in iron transactions between iron acquisition and iron-requiring processes, such as synthesis and/or repair of Fe-S clusters in biosynthetic enzymes. This is Probable Fe(2+)-trafficking protein from Cronobacter sakazakii (strain ATCC BAA-894) (Enterobacter sakazakii).